The primary structure comprises 279 residues: Energy-coupling factor transporter ATP-binding protein EcfA2 (279 aa).

Residues 3-245 (IALENVNFIY…VVFMEEVQLG (243 aa)) enclose the ABC transporter domain. Residue 40–47 (GHTGSGKS) coordinates ATP.

It belongs to the ABC transporter superfamily. Energy-coupling factor EcfA family. As to quaternary structure, forms a stable energy-coupling factor (ECF) transporter complex composed of 2 membrane-embedded substrate-binding proteins (S component), 2 ATP-binding proteins (A component) and 2 transmembrane proteins (T component).

The protein resides in the cell membrane. Functionally, ATP-binding (A) component of a common energy-coupling factor (ECF) ABC-transporter complex. Unlike classic ABC transporters this ECF transporter provides the energy necessary to transport a number of different substrates. In Streptococcus pneumoniae serotype 2 (strain D39 / NCTC 7466), this protein is Energy-coupling factor transporter ATP-binding protein EcfA2.